Reading from the N-terminus, the 62-residue chain is Small acidic protein 1 (62 aa).

In terms of assembly, interacts with the COP9 signalosome. Expressed in roots, flowers, siliques, stems, leaves and seeds. In flowers, detected in petals, anthers and pistils.

Mediates responses to the synthetic auxin 2,4-dichlorophenoxyacetic acid (2,4-D). Not involved in the response to indole-3-acetic acid (IAA). Interacts with RUB modification-related components and may regulate the cullin-ring ubiquitin E3 ligase complex (CRL) activity. In Arabidopsis thaliana (Mouse-ear cress), this protein is Small acidic protein 1 (SMAP1).